The sequence spans 333 residues: DNA-directed RNA polymerase subunit alpha (333 aa).

Positions 1-234 (MQSSVNEFLT…QQLAAFVDLK (234 aa)) are alpha N-terminal domain (alpha-NTD). An alpha C-terminal domain (alpha-CTD) region spans residues 248–333 (IDPILLRPVD…SLKKDDKATA (86 aa)).

The protein belongs to the RNA polymerase alpha chain family. Homodimer. The RNAP catalytic core consists of 2 alpha, 1 beta, 1 beta' and 1 omega subunit. When a sigma factor is associated with the core the holoenzyme is formed, which can initiate transcription.

The catalysed reaction is RNA(n) + a ribonucleoside 5'-triphosphate = RNA(n+1) + diphosphate. Functionally, DNA-dependent RNA polymerase catalyzes the transcription of DNA into RNA using the four ribonucleoside triphosphates as substrates. In Stutzerimonas stutzeri (strain A1501) (Pseudomonas stutzeri), this protein is DNA-directed RNA polymerase subunit alpha.